The following is a 621-amino-acid chain: MRVLKYMLLYILYLKSIVKILRRLNNMAGSNIIIGIDLGTTNSCVAVMENGKSKILETPEGKRTIPSVVAFKDNEIIVGDVAKRQMVTNKNTISSIKRLMGTDKTVEVNGKKYTPEQISAQILSYIKKCAEEKLGQTITKAVITVPAYFNDAERNATKNAGKIAGLEVERIINEPTAAALAYGMDKSKTEHKVLVYDLGGGTFDVSILEIADGTFEVLSTSGDNHLGGDDWDQKIINWIVEEVKKNDKVDLSNDKMAMQRLKDAAEKAKIDLSGLKEVEISLPFIAMTESGPLNVDLKLTRAKFEDLTRDLLERTIKPVEDALKEAKLSASDIHKVLLVGGSTRMPAVEELVKSKLGKSPDKNINPDEVVAAGAAIQGGVLMGDVKDILLLDVTPLTLSIETMGGVSTPLIKRNSTIPISKSQIFSTAADNQPAVDVHVLQGERQMAADNKSLGRFILDGIEPAPRGVPQIEITFNIDANGILNVKAVDKKTNKEATITIKDSSGLSQEEIDKMIKEAEENKEKDAQLKEQQEIRYKAESLINMFKTSLNGEEGKKVDAKQKEEAEKMINEFETLLKEEKWDELKTKINQFEAMASQFAQAAKQNEEKKEEDKKDSEESKN.

Thr-202 carries the phosphothreonine; by autocatalysis modification. The disordered stretch occupies residues 596–621; that stretch reads SQFAQAAKQNEEKKEEDKKDSEESKN. The segment covering 604–621 has biased composition (basic and acidic residues); that stretch reads QNEEKKEEDKKDSEESKN.

Belongs to the heat shock protein 70 family.

Acts as a chaperone. The sequence is that of Chaperone protein DnaK from Malacoplasma penetrans (strain HF-2) (Mycoplasma penetrans).